Here is a 421-residue protein sequence, read N- to C-terminus: Serine hydroxymethyltransferase (421 aa).

Residues L121 and G125 to L127 contribute to the (6S)-5,6,7,8-tetrahydrofolate site. N6-(pyridoxal phosphate)lysine is present on K230. Residues E246 and S354 to F356 each bind (6S)-5,6,7,8-tetrahydrofolate.

Belongs to the SHMT family. Homodimer. It depends on pyridoxal 5'-phosphate as a cofactor.

The protein localises to the cytoplasm. It catalyses the reaction (6R)-5,10-methylene-5,6,7,8-tetrahydrofolate + glycine + H2O = (6S)-5,6,7,8-tetrahydrofolate + L-serine. It participates in one-carbon metabolism; tetrahydrofolate interconversion. It functions in the pathway amino-acid biosynthesis; glycine biosynthesis; glycine from L-serine: step 1/1. Its function is as follows. Catalyzes the reversible interconversion of serine and glycine with tetrahydrofolate (THF) serving as the one-carbon carrier. This reaction serves as the major source of one-carbon groups required for the biosynthesis of purines, thymidylate, methionine, and other important biomolecules. Also exhibits THF-independent aldolase activity toward beta-hydroxyamino acids, producing glycine and aldehydes, via a retro-aldol mechanism. The chain is Serine hydroxymethyltransferase from Rickettsia felis (strain ATCC VR-1525 / URRWXCal2) (Rickettsia azadi).